The sequence spans 2185 residues: Genome polyprotein (2185 aa).

Gly-2 carries N-myristoyl glycine; by host lipidation. At Gly-2–Gln-1495 the chain is on the cytoplasmic side. An amphipathic alpha-helix region spans residues Phe-566 to Val-582. Active-site for protease 2A activity residues include His-872 and Asp-890. Zn(2+)-binding residues include Cys-907 and Cys-909. The active-site For protease 2A activity is the Cys-961. Positions 967 and 969 each coordinate Zn(2+). The tract at residues Asn-1101 to Gln-1173 is membrane-binding. Residues Asn-1101 to Thr-1239 are oligomerization. The segment at Ala-1122–Gln-1126 is RNA-binding. Residues Glu-1205–Asn-1361 enclose the SF3 helicase domain. Residues Cys-1369, Cys-1381, and Cys-1386 each contribute to the Zn(2+) site. The segment at Cys-1369–Cys-1386 adopts a C4-type; degenerate zinc-finger fold. Positions Glu-1413–Val-1420 are RNA-binding. The interval Leu-1424–Gln-1429 is oligomerization. The stretch at Ala-1496–Tyr-1511 is an intramembrane region. Residues Lys-1512–Phe-2185 lie on the Cytoplasmic side of the membrane. At Tyr-1521 the chain carries O-(5'-phospho-RNA)-tyrosine. The Peptidase C3 domain maps to Gly-1541–Phe-1719. Active-site for protease 3C activity residues include His-1580, Glu-1611, and Cys-1687. A RdRp catalytic domain is found at Gly-1950 to Leu-2066. 2 residues coordinate Mg(2+): Asp-1956 and Asp-2052.

Belongs to the picornaviruses polyprotein family. In terms of assembly, interacts with capsid protein VP1 and capsid protein VP3 to form heterotrimeric protomers. Interacts with capsid protein VP0, and capsid protein VP3 to form heterotrimeric protomers. Five protomers subsequently associate to form pentamers which serve as building blocks for the capsid. Interacts with capsid protein VP2, capsid protein VP3 and capsid protein VP4 following cleavage of capsid protein VP0. As to quaternary structure, interacts with capsid protein VP1 and capsid protein VP3 in the mature capsid. In terms of assembly, interacts with capsid protein VP0 and capsid protein VP1 to form heterotrimeric protomers. Five protomers subsequently associate to form pentamers which serve as building blocks for the capsid. Interacts with capsid protein VP4 in the mature capsid. Interacts with protein 2C; this interaction may be important for virion morphogenesis. Interacts with capsid protein VP1 and capsid protein VP3. As to quaternary structure, homodimer. In terms of assembly, homohexamer; forms a hexameric ring structure with 6-fold symmetry characteristic of AAA+ ATPases. Interacts (via N-terminus) with host RTN3 (via reticulon domain); this interaction is important for viral replication. Interacts with capsid protein VP3; this interaction may be important for virion morphogenesis. Interacts with protein 3CD. As to quaternary structure, homodimer. Interacts with host GBF1. Interacts (via GOLD domain) with host ACBD3 (via GOLD domain); this interaction allows the formation of a viral protein 3A/ACBD3 heterotetramer with a 2:2 stoichiometry, which will stimulate the recruitment of host PI4KB in order to synthesize PI4P at the viral RNA replication sites. In terms of assembly, interacts with RNA-directed RNA polymerase. Interacts with protein 3AB and with RNA-directed RNA polymerase. As to quaternary structure, interacts with Viral protein genome-linked and with protein 3CD. The cofactor is Mg(2+). Post-translationally, specific enzymatic cleavages in vivo by the viral proteases yield processing intermediates and the mature proteins. In terms of processing, myristoylation is required for the formation of pentamers during virus assembly. Further assembly of 12 pentamers and a molecule of genomic RNA generates the provirion. During virion maturation, immature virions are rendered infectious following cleavage of VP0 into VP4 and VP2. This maturation seems to be an autocatalytic event triggered by the presence of RNA in the capsid and it is followed by a conformational change infectious virion. Post-translationally, myristoylation is required during RNA encapsidation and formation of the mature virus particle. In terms of processing, VPg is uridylylated by the polymerase into VPg-pUpU. This acts as a nucleotide-peptide primer for the genomic RNA replication.

It localises to the virion. Its subcellular location is the host cytoplasm. The protein localises to the host cytoplasmic vesicle membrane. The protein resides in the host nucleus. It carries out the reaction a ribonucleoside 5'-triphosphate + H2O = a ribonucleoside 5'-diphosphate + phosphate + H(+). It catalyses the reaction Selective cleavage of Tyr-|-Gly bond in the picornavirus polyprotein.. The catalysed reaction is RNA(n) + a ribonucleoside 5'-triphosphate = RNA(n+1) + diphosphate. The enzyme catalyses Selective cleavage of Gln-|-Gly bond in the poliovirus polyprotein. In other picornavirus reactions Glu may be substituted for Gln, and Ser or Thr for Gly.. Its activity is regulated as follows. Replication or transcription is subject to high level of random mutations by the nucleotide analog ribavirin. Its function is as follows. Forms an icosahedral capsid of pseudo T=3 symmetry with capsid proteins VP2 and VP3. The capsid is 300 Angstroms in diameter, composed of 60 copies of each capsid protein and enclosing the viral positive strand RNA genome. Capsid protein VP1 mainly forms the vertices of the capsid. Capsid protein VP1 interacts with host cell receptor to provide virion attachment to target host cells. This attachment induces virion internalization. Tyrosine kinases are probably involved in the entry process. After binding to its receptor, the capsid undergoes conformational changes. Capsid protein VP1 N-terminus (that contains an amphipathic alpha-helix) and capsid protein VP4 are externalized. Together, they shape a pore in the host membrane through which viral genome is translocated to host cell cytoplasm. Functionally, forms an icosahedral capsid of pseudo T=3 symmetry with capsid proteins VP2 and VP3. The capsid is 300 Angstroms in diameter, composed of 60 copies of each capsid protein and enclosing the viral positive strand RNA genome. In terms of biological role, lies on the inner surface of the capsid shell. After binding to the host receptor, the capsid undergoes conformational changes. Capsid protein VP4 is released, Capsid protein VP1 N-terminus is externalized, and together, they shape a pore in the host membrane through which the viral genome is translocated into the host cell cytoplasm. Component of immature procapsids, which is cleaved into capsid proteins VP4 and VP2 after maturation. Allows the capsid to remain inactive before the maturation step. Its function is as follows. Cysteine protease that cleaves viral polyprotein and specific host proteins. It is responsible for the autocatalytic cleavage between the P1 and P2 regions, which is the first cleavage occurring in the polyprotein. Also cleaves the host translation initiation factor EIF4G1, in order to shut down the capped cellular mRNA translation. Inhibits the host nucleus-cytoplasm protein and RNA trafficking by cleaving host members of the nuclear pores. Counteracts stress granule formation probably by antagonizing its assembly or promoting its dissassembly. Cleaves and inhibits host IFIH1/MDA5, thereby inhibiting the type-I IFN production and the establishment of the antiviral state. Cleaves and inhibits host MAVS, thereby inhibiting the type-I IFN production and the establishment of the antiviral state. Functionally, plays an essential role in the virus replication cycle by acting as a viroporin. Creates a pore in the host endoplasmic reticulum and as a consequence releases Ca2+ in the cytoplasm of infected cell. In turn, high levels of cytoplasmic calcium may trigger membrane trafficking and transport of viral ER-associated proteins to viroplasms, sites of viral genome replication. In terms of biological role, induces and associates with structural rearrangements of intracellular membranes. Displays RNA-binding, nucleotide binding and NTPase activities. May play a role in virion morphogenesis and viral RNA encapsidation by interacting with the capsid protein VP3. Localizes the viral replication complex to the surface of membranous vesicles. Together with protein 3CD binds the Cis-Active RNA Element (CRE) which is involved in RNA synthesis initiation. Acts as a cofactor to stimulate the activity of 3D polymerase, maybe through a nucleid acid chaperone activity. Its function is as follows. Localizes the viral replication complex to the surface of membranous vesicles. It inhibits host cell endoplasmic reticulum-to-Golgi apparatus transport and causes the disassembly of the Golgi complex, possibly through GBF1 interaction. This would result in depletion of MHC, trail receptors and IFN receptors at the host cell surface. Plays an essential role in viral RNA replication by recruiting ACBD3 and PI4KB at the viral replication sites, thereby allowing the formation of the rearranged membranous structures where viral replication takes place. Functionally, acts as a primer for viral RNA replication and remains covalently bound to viral genomic RNA. VPg is uridylylated prior to priming replication into VPg-pUpU. The oriI viral genomic sequence may act as a template for this. The VPg-pUpU is then used as primer on the genomic RNA poly(A) by the RNA-dependent RNA polymerase to replicate the viral genome. During genome replication, the VPg-RNA linkage is removed by the host TDP2, thereby accelerating replication. During the late stage of the replication cycle, host TDP2 is excluded from sites of viral RNA synthesis and encapsidation, allowing for the generation of progeny virions. In terms of biological role, involved in the viral replication complex and viral polypeptide maturation. It exhibits protease activity with a specificity and catalytic efficiency that is different from protease 3C. Protein 3CD lacks polymerase activity. Protein 3CD binds to the 5'UTR of the viral genome. Replicates the viral genomic RNA on the surface of intracellular membranes. May form linear arrays of subunits that propagate along a strong head-to-tail interaction called interface-I. Covalently attaches UMP to a tyrosine of VPg, which is used to prime RNA synthesis. The positive stranded RNA genome is first replicated at virus induced membranous vesicles, creating a dsRNA genomic replication form. This dsRNA is then used as template to synthesize positive stranded RNA genomes. ss(+)RNA genomes are either translated, replicated or encapsidated. Its function is as follows. Major viral protease that mediates proteolytic processing of the polyprotein. Cleaves host EIF5B, contributing to host translation shutoff. Also cleaves host PABPC1, contributing to host translation shutoff. Cleaves host NLRP1, triggers host N-glycine-mediated degradation of the autoinhibitory NLRP1 N-terminal fragment. In Homo sapiens (Human), this protein is Genome polyprotein.